The chain runs to 236 residues: Protein YIPF6 (236 aa).

A2 bears the N-acetylalanine mark. Residues 2 to 84 (AEAEDSPGEQ…HVLYPRKSNT (83 aa)) lie on the Cytoplasmic side of the membrane. S7 carries the post-translational modification Phosphoserine. Residues 85 to 105 (LLRDWDLWGPLILCVSLALML) traverse the membrane as a helical segment. Topologically, residues 106-116 (QKSSVEGKRDG) are lumenal. A helical transmembrane segment spans residues 117–137 (GSPEFAEVFVIIWFGAVTITL). Topologically, residues 138-147 (NSKLLGGNIS) are cytoplasmic. A helical transmembrane segment spans residues 148 to 168 (FFQSLCVLGYCVLPLNIAMLI). Residues 169 to 185 (CRLLLLAGQGPINFMIR) lie on the Lumenal side of the membrane. The helical transmembrane segment at 186–206 (LFVVLVMFAWSVIASTAFLAD) threads the bilayer. The Cytoplasmic portion of the chain corresponds to 207 to 213 (CQPPNRK). The chain crosses the membrane as a helical span at residues 214–234 (ALAVYPVFLFYFVVSWMILTF). Over 235–236 (TP) the chain is Lumenal.

Belongs to the YIP1 family. In terms of assembly, predominantly interacts with YIPF1 or YIPF2, but may also form a ternary complex with YIPF1 and YIPF2. This interaction may stabilize YIPF1 and YIPF2.

It localises to the golgi apparatus membrane. Its function is as follows. May be required for stable YIPF1 and YIPF2 protein expression. The sequence is that of Protein YIPF6 (Yipf6) from Rattus norvegicus (Rat).